Reading from the N-terminus, the 74-residue chain is Translation initiation factor IF-1, chloroplastic (74 aa).

The 72-residue stretch at 1–72 folds into the S1-like domain; that stretch reads MEKQNIIEME…TKGRITYRLR (72 aa).

This sequence belongs to the IF-1 family. Component of the 30S ribosomal translation pre-initiation complex which assembles on the 30S ribosome in the order IF-2 and IF-3, IF-1 and N-formylmethionyl-tRNA(fMet); mRNA recruitment can occur at any time during PIC assembly.

Its subcellular location is the plastid. It is found in the chloroplast. Its function is as follows. One of the essential components for the initiation of protein synthesis. Stabilizes the binding of IF-2 and IF-3 on the 30S subunit to which N-formylmethionyl-tRNA(fMet) subsequently binds. Helps modulate mRNA selection, yielding the 30S pre-initiation complex (PIC). Upon addition of the 50S ribosomal subunit IF-1, IF-2 and IF-3 are released leaving the mature 70S translation initiation complex. This chain is Translation initiation factor IF-1, chloroplastic, found in Chlorokybus atmophyticus (Soil alga).